Reading from the N-terminus, the 258-residue chain is Very-long-chain aldehyde decarbonylase GL1-9 (258 aa).

The next 5 helical transmembrane spans lie at 13 to 33 (MGTF…QLVL), 63 to 83 (GVLL…MVTS), 88 to 108 (VVVQ…MLVM), 149 to 169 (PLEG…VSGM), and 175 to 195 (VFFF…LWLP). In terms of domain architecture, Fatty acid hydroxylase spans 101 to 237 (FLVAMLVMDS…FSIWDRILGT (137 aa)).

This sequence belongs to the sterol desaturase family. Homodimer.

It is found in the endoplasmic reticulum membrane. The enzyme catalyses a long-chain fatty aldehyde + 2 NADPH + O2 + H(+) = a long-chain alkane + formate + 2 NADP(+) + H2O. In terms of biological role, aldehyde decarbonylase involved in the conversion of aldehydes to alkanes. Core component of a very-long-chain alkane synthesis complex. The polypeptide is Very-long-chain aldehyde decarbonylase GL1-9 (Oryza sativa subsp. indica (Rice)).